The following is a 412-amino-acid chain: Adenosine receptor A2a (412 aa).

Topologically, residues 1 to 7 (MSTMGSW) are extracellular. The chain crosses the membrane as a helical span at residues 8 to 32 (VYITVELAIAVLAILGNVLVCWAVW). Over 33-42 (LNSNLQNVTN) the chain is Cytoplasmic. A helical transmembrane segment spans residues 43 to 66 (YFVVSLAAADIAVGVLAIPFAITI). Over 67 to 77 (STGFCAACHNC) the chain is Extracellular. 3 disulfide bridges follow: cysteine 71/cysteine 159, cysteine 74/cysteine 146, and cysteine 77/cysteine 166. Residues 78-100 (LFFACFVLVLTQSSIFSLLAIAI) traverse the membrane as a helical segment. At 101-120 (DRYIAIRIPLRYNGLVTGTR) the chain is on the cytoplasmic side. The chain crosses the membrane as a helical span at residues 121–143 (AKGIIAVCWVLSFAIGLTPMLGW). Residues 144–173 (NNCSQPKEGRNYSQGCGEGQVACLFEDVVP) lie on the Extracellular side of the membrane. Residues asparagine 145 and asparagine 154 are each glycosylated (N-linked (GlcNAc...) asparagine). Position 169 (glutamate 169) interacts with adenosine. The chain crosses the membrane as a helical span at residues 174–198 (MNYMVYYNFFAFVLVPLLLMLGVYL). Topologically, residues 199–234 (RIFLAARRQLKQMESQPLPGERARSTLQKEVHAAKS) are cytoplasmic. Residues 235–258 (LAIIVGLFALCWLPLHIINCFTFF) traverse the membrane as a helical segment. Asparagine 253 is a binding site for adenosine. A disulfide bridge connects residues cysteine 259 and cysteine 262. Residues 259-266 (CPECSHAP) are Extracellular-facing. A helical membrane pass occupies residues 267 to 290 (LWLMYLTIVLSHTNSVVNPFIYAY). Positions 277 and 278 each coordinate adenosine. The Cytoplasmic segment spans residues 291–412 (RIREFRQTFR…PLAQDGAGVS (122 aa)). Residues 392–412 (GACPESPGLEGPLAQDGAGVS) form a disordered region.

The protein belongs to the G-protein coupled receptor 1 family. In terms of assembly, interacts (via cytoplasmic C-terminal domain) with USP4; the interaction is direct. May interact with DRD4. Interacts with NECAB2. Interacts (via cytoplasmic C-terminal domain) with GAS2L2; interaction enhances receptor-mediated adenylyl cyclase activity. Post-translationally, ubiquitinated. Deubiquitinated by USP4; leading to stabilization and expression at the cell surface.

It is found in the cell membrane. Functionally, receptor for adenosine. The activity of this receptor is mediated by G proteins which activate adenylyl cyclase. This Canis lupus familiaris (Dog) protein is Adenosine receptor A2a (ADORA2A).